Reading from the N-terminus, the 209-residue chain is High frequency lysogenization protein HflD homolog (209 aa).

It belongs to the HflD family.

The protein localises to the cytoplasm. Its subcellular location is the cell inner membrane. The protein is High frequency lysogenization protein HflD homolog of Halorhodospira halophila (strain DSM 244 / SL1) (Ectothiorhodospira halophila (strain DSM 244 / SL1)).